The primary structure comprises 417 residues: NADH-quinone oxidoreductase subunit D (417 aa).

The protein belongs to the complex I 49 kDa subunit family. As to quaternary structure, NDH-1 is composed of 14 different subunits. Subunits NuoB, C, D, E, F, and G constitute the peripheral sector of the complex.

It localises to the cell inner membrane. It catalyses the reaction a quinone + NADH + 5 H(+)(in) = a quinol + NAD(+) + 4 H(+)(out). Its function is as follows. NDH-1 shuttles electrons from NADH, via FMN and iron-sulfur (Fe-S) centers, to quinones in the respiratory chain. The immediate electron acceptor for the enzyme in this species is believed to be ubiquinone. Couples the redox reaction to proton translocation (for every two electrons transferred, four hydrogen ions are translocated across the cytoplasmic membrane), and thus conserves the redox energy in a proton gradient. In Methylobacillus flagellatus (strain ATCC 51484 / DSM 6875 / VKM B-1610 / KT), this protein is NADH-quinone oxidoreductase subunit D.